A 300-amino-acid polypeptide reads, in one-letter code: uncharacterized protein (300 aa).

Over residues methionine 1 to glutamine 11 the composition is skewed to polar residues. The interval methionine 1–aspartate 20 is disordered. The segment at residues methionine 1–arginine 92 is a DNA-binding region (recombinase). Residues serine 162–glutamate 249 adopt a coiled-coil conformation.

This is an uncharacterized protein from Bacillus subtilis (strain 168).